The following is a 265-amino-acid chain: Aquaporin-5 (265 aa).

Topologically, residues 1-12 are cytoplasmic; that stretch reads MKKEVCSAAFLK. A helical transmembrane segment spans residues 13 to 33; it reads AVFAEFLATLIFVFFGLGSAL. The Extracellular portion of the chain corresponds to 34–39; that stretch reads KWPSAM. A helical transmembrane segment spans residues 40-60; the sequence is PSVLQISLAFGLAIGTMAQAL. Over 61-65 the chain is Cytoplasmic; it reads GPVSG. The discontinuously helical intramembrane region spans 66–74; the sequence is GHMNPAITL. The NPA 1 signature appears at 69-71; that stretch reads NPA. Residues 75–87 are Cytoplasmic-facing; it reads ALLVGNQISLLRA. Residues 88–108 form a helical membrane-spanning segment; sequence VFYLVAQLVGAIAGAAILYGL. At 109-126 the chain is on the extracellular side; that stretch reads APYNARSNLAVNALNNNT. Asn-124 and Asn-125 each carry an N-linked (GlcNAc...) asparagine glycan. The helical transmembrane segment at 127-147 threads the bilayer; the sequence is TAGQAVVAEMILTFQLALCVF. At 148-158 the chain is on the cytoplasmic side; it reads SSTDSRRTSPV. The chain crosses the membrane as a helical span at residues 159–179; it reads GSPALSIGLSVTLGHLVGIYF. Position 180 (Thr-180) is a topological domain, extracellular. The segment at residues 181-191 is an intramembrane region (discontinuously helical); that stretch reads GCSMNPARSFG. Residues 185 to 187 carry the NPA 2 motif; it reads NPA. Topologically, residues 192-203 are extracellular; that stretch reads PAVIMSRFSSAH. A helical transmembrane segment spans residues 204 to 224; it reads WVFWVGPIVGAATAAIIYFYL. Residues 225–265 are Cytoplasmic-facing; it reads LFPHSLSLSDRVAILKGTYEPDEDWEESQEERKKTMELTAH.

The protein belongs to the MIP/aquaporin (TC 1.A.8) family. Homotetramer; each monomer provides an independent water pore. Interacts with TRPV4; the interaction is probably indirect and regulates TRPV4 activation by hypotonicity.

It is found in the apical cell membrane. The protein localises to the cell membrane. It localises to the cytoplasmic vesicle membrane. The enzyme catalyses H2O(in) = H2O(out). Its function is as follows. Aquaporins form homotetrameric transmembrane channels, with each monomer independently mediating water transport across the plasma membrane along its osmotic gradient. Plays an important role in fluid secretion in salivary glands. Required for TRPV4 activation by hypotonicity. Together with TRPV4, controls regulatory volume decrease in salivary epithelial cells. Seems to play a redundant role in water transport in the eye, lung and in sweat glands. The chain is Aquaporin-5 from Ovis aries (Sheep).